The primary structure comprises 469 residues: DNA-binding transcriptional regulator NtrC (469 aa).

The Response regulatory domain occupies 5–119 (IVWVVDDDSS…EAVALVERAI (115 aa)). 4-aspartylphosphate is present on Asp-54. Residues 140-369 (IIGEAPAMQD…LENTCRWLTV (230 aa)) enclose the Sigma-54 factor interaction domain. Residues 168–175 (GESGTGKE) and 231–240 (ADGGTLFLDE) contribute to the ATP site. Residues 445 to 464 (KQEAARLLGWGRNTLTRKLK) constitute a DNA-binding region (H-T-H motif).

In terms of processing, phosphorylated and dephosphorylated by NtrB.

It is found in the cytoplasm. Functionally, member of the two-component regulatory system NtrB/NtrC, which controls expression of the nitrogen-regulated (ntr) genes in response to nitrogen limitation. Phosphorylated NtrC binds directly to DNA and stimulates the formation of open promoter-sigma54-RNA polymerase complexes. The polypeptide is DNA-binding transcriptional regulator NtrC (glnG) (Escherichia coli O157:H7).